Reading from the N-terminus, the 346-residue chain is Dihydroorotase (346 aa).

Zn(2+) contacts are provided by His14 and His16. Residues 16 to 18 and Asn42 each bind substrate; that span reads HLR. Positions 100, 137, and 175 each coordinate Zn(2+). Lys100 carries the post-translational modification N6-carboxylysine. Residue His137 participates in substrate binding. Leu220 is a binding site for substrate. Asp248 contacts Zn(2+). Asp248 is an active-site residue. Residues His252 and Ala264 each coordinate substrate.

This sequence belongs to the metallo-dependent hydrolases superfamily. DHOase family. Class II DHOase subfamily. Homodimer. Zn(2+) is required as a cofactor.

The enzyme catalyses (S)-dihydroorotate + H2O = N-carbamoyl-L-aspartate + H(+). It functions in the pathway pyrimidine metabolism; UMP biosynthesis via de novo pathway; (S)-dihydroorotate from bicarbonate: step 3/3. Catalyzes the reversible cyclization of carbamoyl aspartate to dihydroorotate. The polypeptide is Dihydroorotase (Ruegeria sp. (strain TM1040) (Silicibacter sp.)).